The primary structure comprises 366 residues: Holliday junction branch migration complex subunit RuvB (366 aa).

The disordered stretch occupies residues M1 to R50. The large ATPase domain (RuvB-L) stretch occupies residues P13–Y210. Residues G15–A24 are compositionally biased toward basic and acidic residues. Residues I49, R50, G91, K94, T95, T96, E157–Y159, R200, Y210, and R247 contribute to the ATP site. T95 lines the Mg(2+) pocket. Residues E211 to Q281 are small ATPAse domain (RuvB-S). The head domain (RuvB-H) stretch occupies residues P284–L366. DNA is bound by residues R339 and R344.

Belongs to the RuvB family. As to quaternary structure, homohexamer. Forms an RuvA(8)-RuvB(12)-Holliday junction (HJ) complex. HJ DNA is sandwiched between 2 RuvA tetramers; dsDNA enters through RuvA and exits via RuvB. An RuvB hexamer assembles on each DNA strand where it exits the tetramer. Each RuvB hexamer is contacted by two RuvA subunits (via domain III) on 2 adjacent RuvB subunits; this complex drives branch migration. In the full resolvosome a probable DNA-RuvA(4)-RuvB(12)-RuvC(2) complex forms which resolves the HJ.

Its subcellular location is the cytoplasm. The catalysed reaction is ATP + H2O = ADP + phosphate + H(+). The RuvA-RuvB-RuvC complex processes Holliday junction (HJ) DNA during genetic recombination and DNA repair, while the RuvA-RuvB complex plays an important role in the rescue of blocked DNA replication forks via replication fork reversal (RFR). RuvA specifically binds to HJ cruciform DNA, conferring on it an open structure. The RuvB hexamer acts as an ATP-dependent pump, pulling dsDNA into and through the RuvAB complex. RuvB forms 2 homohexamers on either side of HJ DNA bound by 1 or 2 RuvA tetramers; 4 subunits per hexamer contact DNA at a time. Coordinated motions by a converter formed by DNA-disengaged RuvB subunits stimulates ATP hydrolysis and nucleotide exchange. Immobilization of the converter enables RuvB to convert the ATP-contained energy into a lever motion, pulling 2 nucleotides of DNA out of the RuvA tetramer per ATP hydrolyzed, thus driving DNA branch migration. The RuvB motors rotate together with the DNA substrate, which together with the progressing nucleotide cycle form the mechanistic basis for DNA recombination by continuous HJ branch migration. Branch migration allows RuvC to scan DNA until it finds its consensus sequence, where it cleaves and resolves cruciform DNA. The sequence is that of Holliday junction branch migration complex subunit RuvB from Nostoc punctiforme (strain ATCC 29133 / PCC 73102).